The following is a 1673-amino-acid chain: AF4/FMR2 family member lilli (1673 aa).

9 disordered regions span residues 1–24, 54–80, 125–302, 407–534, 575–604, 722–1086, 1114–1133, 1141–1160, and 1187–1315; these read MAQQ…NNNN, YSQN…QQGI, SRSA…PPEK, QLPP…GAQN, VGTG…SNKW, RLSD…INTL, QGKL…PAAP, RMTP…PART, and KLTP…MGKE. A compositionally biased stretch (basic and acidic residues) spans 71–80; the sequence is REKIERQQGI. Composition is skewed to low complexity over residues 146–180 and 223–244; these read SLGH…QQQQ and PRTS…SGGV. Thr-420 carries the phosphothreonine modification. Over residues 428-441 the composition is skewed to basic and acidic residues; that stretch reads LKTEKNHSLEKQDS. Over residues 443 to 454 the composition is skewed to acidic residues; it reads LENDLELSESED. A phosphoserine mark is found at Ser-450 and Ser-452. Residues 465–486 show a composition bias toward low complexity; that stretch reads GNSSNSSESDSSESGSESSSKN. The span at 491 to 500 shows a compositional bias: basic residues; that stretch reads HPNHQQHHHQ. The span at 501-525 shows a compositional bias: low complexity; the sequence is LQQQQQQQQATMQQQQVLQQQHRSQ. The segment covering 577-586 has biased composition (gly residues); sequence TGSGSGGTLS. Positions 594–604 are enriched in polar residues; that stretch reads KTPSPTESNKW. A compositionally biased stretch (low complexity) spans 724-757; that stretch reads SDSGTSASGSSSSSSSSSDSAMGGEVVPMPGPGE. Polar residues predominate over residues 775–788; sequence QPTQSQKAPPSNSV. A compositionally biased stretch (basic residues) spans 802–812; that stretch reads QRQKKPRKKKA. 2 positions are modified to phosphoserine: Ser-821 and Ser-822. The segment at residues 851 to 863 is a DNA-binding region (a.T hook); it reads KKGRGRPRKQQQS. The segment covering 860–898 has biased composition (low complexity); that stretch reads QQQSGGSGNLSSASAGSSSQTKGPTLTAAKKPLAKTPLA. Phosphoserine is present on residues Ser-871 and Ser-873. Positions 909 to 919 are enriched in polar residues; the sequence is SQSSSNGNTPT. Composition is skewed to low complexity over residues 949–965 and 993–1004; these read SSSA…SSSS and GSGSSSPSSSGS. Polar residues predominate over residues 1011-1022; the sequence is TRSQVGSGQALA. Residues 1034–1060 show a composition bias toward low complexity; it reads SQHSQHLSSSDCSSSSGGCTAVCSSSS. Residues 1065–1082 show a composition bias toward basic and acidic residues; that stretch reads EGRREKERERKPKSDKNK. The span at 1190–1205 shows a compositional bias: polar residues; it reads PAQQNGHLTPKDQATN. Basic and acidic residues-rich tracts occupy residues 1226–1243 and 1252–1282; these read EHPV…EAKF and FQLK…EQPP. Ser-1362 is modified (phosphoserine). The residue at position 1364 (Thr-1364) is a Phosphothreonine. The span at 1564-1583 shows a compositional bias: low complexity; the sequence is NTPSSISPSNSVGSQGSGSN. The tract at residues 1564–1588 is disordered; sequence NTPSSISPSNSVGSQGSGSNTPPGR.

This sequence belongs to the AF4 family. In terms of assembly, component of the super elongation complex (SEC), at least composed of Ell, Cdk9, cyclin-T (CycT), lilli and ear.

The protein localises to the nucleus. Has a role in transcriptional regulation. Acts in parallel with the Ras/MAPK and the PI3K/PKB pathways in the control of cell identity and cellular growth. Essential for regulation of the cytoskeleton and cell growth but not for cell proliferation or growth rate. Required specifically for the microtubule-based basal transport of lipid droplets. Plays a partially redundant function downstream of Raf in cell fate specification in the developing eye. Pair-rule protein that regulates embryonic cellularization, gastrulation and segmentation. The polypeptide is AF4/FMR2 family member lilli (Drosophila melanogaster (Fruit fly)).